Here is a 467-residue protein sequence, read N- to C-terminus: Glycosyl hydrolase family 109 protein (467 aa).

A signal peptide (tat-type signal) is located at residues 1-31 (MKNFNRRAFLKAAGATTAGLVTSGLILPASA). NAD(+) is bound by residues 66–67 (QR), D88, 137–140 (WQWH), 157–158 (EV), and N186. Substrate contacts are provided by residues Y215, R234, 246–249 (YPTH), and Y328. Y246 is an NAD(+) binding site.

This sequence belongs to the Gfo/Idh/MocA family. Glycosyl hydrolase 109 subfamily. NAD(+) is required as a cofactor. Predicted to be exported by the Tat system. The position of the signal peptide cleavage has not been experimentally proven.

In terms of biological role, glycosidase. In Shewanella woodyi (strain ATCC 51908 / MS32), this protein is Glycosyl hydrolase family 109 protein.